Consider the following 140-residue polypeptide: Putative pre-16S rRNA nuclease (140 aa).

It belongs to the YqgF nuclease family.

It localises to the cytoplasm. Could be a nuclease involved in processing of the 5'-end of pre-16S rRNA. The protein is Putative pre-16S rRNA nuclease of Edwardsiella ictaluri (strain 93-146).